Reading from the N-terminus, the 169-residue chain is Desumoylating isopeptidase 1 (169 aa).

The 143-residue stretch at 8 to 150 (HLVRLYVYDM…LGQALRPLLD (143 aa)) folds into the PPPDE domain. Histidine 39 is an active-site residue. Positions 84 to 92 (IFLEYLSSL) match the Nuclear export signal 1 motif. Cysteine 109 is an active-site residue. Residues 140–154 (PLGQALRPLLDSVQI) carry the Nuclear export signal 2 motif.

Belongs to the DeSI family. In terms of assembly, homodimer.

It localises to the cytoplasm. The protein resides in the nucleus. It catalyses the reaction S-hexadecanoyl-L-cysteinyl-[protein] + H2O = L-cysteinyl-[protein] + hexadecanoate + H(+). Its function is as follows. Protease which deconjugates SUMO1, SUMO2 and SUMO3 from some substrate proteins. Has isopeptidase but not SUMO-processing activity. Collaborates with ubqln4 in the export of ubiquitinated proteins from the nucleus to the cytoplasm. Exhibits palmitoyl protein thioesterase (S-depalmitoylation) activity towards synthetic substrates 4-methylumbelliferyl-6-S-palmitoyl-beta-D-glucopyranoside and S-depalmitoylation probe 5 (DPP-5). In Xenopus laevis (African clawed frog), this protein is Desumoylating isopeptidase 1.